A 490-amino-acid polypeptide reads, in one-letter code: Ribulose bisphosphate carboxylase large chain (490 aa).

The substrate site is built by asparagine 127 and threonine 177. The active-site Proton acceptor is lysine 179. Lysine 181 contributes to the substrate binding site. Residues lysine 205, aspartate 207, and glutamate 208 each contribute to the Mg(2+) site. Lysine 205 is subject to N6-carboxylysine. The Proton acceptor role is filled by histidine 297. 3 residues coordinate substrate: arginine 298, histidine 330, and serine 382.

Belongs to the RuBisCO large chain family. Type I subfamily. Heterohexadecamer of 8 large chains and 8 small chains. Mg(2+) is required as a cofactor.

It is found in the plastid. The protein localises to the chloroplast. The catalysed reaction is 2 (2R)-3-phosphoglycerate + 2 H(+) = D-ribulose 1,5-bisphosphate + CO2 + H2O. The enzyme catalyses D-ribulose 1,5-bisphosphate + O2 = 2-phosphoglycolate + (2R)-3-phosphoglycerate + 2 H(+). Its function is as follows. RuBisCO catalyzes two reactions: the carboxylation of D-ribulose 1,5-bisphosphate, the primary event in carbon dioxide fixation, as well as the oxidative fragmentation of the pentose substrate in the photorespiration process. Both reactions occur simultaneously and in competition at the same active site. In Detonula confervacea (Marine diatom), this protein is Ribulose bisphosphate carboxylase large chain.